A 262-amino-acid polypeptide reads, in one-letter code: Hydroxyethylthiazole kinase (262 aa).

M50 provides a ligand contact to substrate. 2 residues coordinate ATP: R125 and T171. G198 contributes to the substrate binding site.

Belongs to the Thz kinase family. Mg(2+) serves as cofactor.

It catalyses the reaction 5-(2-hydroxyethyl)-4-methylthiazole + ATP = 4-methyl-5-(2-phosphooxyethyl)-thiazole + ADP + H(+). The protein operates within cofactor biosynthesis; thiamine diphosphate biosynthesis; 4-methyl-5-(2-phosphoethyl)-thiazole from 5-(2-hydroxyethyl)-4-methylthiazole: step 1/1. Functionally, catalyzes the phosphorylation of the hydroxyl group of 4-methyl-5-beta-hydroxyethylthiazole (THZ). This is Hydroxyethylthiazole kinase from Escherichia coli O17:K52:H18 (strain UMN026 / ExPEC).